The following is a 511-amino-acid chain: Myrosinase 5 (511 aa).

The N-terminal stretch at 1–23 (MAIPKAHYSLAVLVLLFVVVSSS) is a signal peptide. Cystine bridges form between Cys31–Cys450, Cys39–Cys445, and Cys230–Cys233. N-linked (GlcNAc...) asparagine glycosylation is found at Asn46 and Asn53. A beta-D-glucoside contacts are provided by residues Gln64, His165, and 210 to 211 (NQ). A glycan (N-linked (GlcNAc...) asparagine) is linked at Asn222. Positions 351 and 418 each coordinate a beta-D-glucoside. Glu418 (nucleophile) is an active-site residue. Asn428 carries N-linked (GlcNAc...) asparagine glycosylation. A beta-D-glucoside contacts are provided by residues Trp467, 474–475 (EF), and Phe483. Residue Asn489 is glycosylated (N-linked (GlcNAc...) asparagine).

The protein belongs to the glycosyl hydrolase 1 family. Specifically expressed in roots.

It catalyses the reaction a thioglucoside + H2O = a sugar + a thiol.. The enzyme catalyses Hydrolysis of terminal, non-reducing beta-D-glucosyl residues with release of beta-D-glucose.. Hydrolyzes sinigrin and, with lower efficiency, p-nitrophenyl beta-D-glucoside. This chain is Myrosinase 5, found in Arabidopsis thaliana (Mouse-ear cress).